A 147-amino-acid polypeptide reads, in one-letter code: MSEAKDFLRDLLDQVRAGDSYGQLDRFSDSQLLAPFVVTKEQRRTIATNCDLDIATAARLRSFYQAVAAATEKATGAFTTTILDLNSEGFGRVIIFAGRLVVLDNALRDVQRFGFNSSEELAARGEALVLGASKLIERWSEVARDDS.

The protein belongs to the UPF0460 family.

The chain is UPF0460 protein in nifX-nifW intergenic region from Frankia alni.